A 337-amino-acid polypeptide reads, in one-letter code: Receptor like protein kinase S.3 (337 aa).

The region spanning 50–316 (FKESELFGTE…VNYLEGNDVL (267 aa)) is the Protein kinase domain. Residues 56 to 64 (FGTEANGTV) and Lys78 contribute to the ATP site. Phosphotyrosine is present on Tyr123. Asp171 functions as the Proton acceptor in the catalytic mechanism.

Belongs to the protein kinase superfamily. Ser/Thr protein kinase family.

The catalysed reaction is L-seryl-[protein] + ATP = O-phospho-L-seryl-[protein] + ADP + H(+). It carries out the reaction L-threonyl-[protein] + ATP = O-phospho-L-threonyl-[protein] + ADP + H(+). The protein is Receptor like protein kinase S.3 (LECRKS3) of Arabidopsis thaliana (Mouse-ear cress).